The following is a 210-amino-acid chain: 7-carboxy-7-deazaguanine synthase (210 aa).

Substrate-binding positions include 12 to 14 (LQG) and Arg-27. One can recognise a Radical SAM core domain in the interval 18–210 (QAGRAAVFCR…LQTHKYIGIP (193 aa)). [4Fe-4S] cluster-binding residues include Cys-31, Cys-46, and Cys-49. A Mg(2+)-binding site is contributed by Thr-51. Thr-90 serves as a coordination point for substrate. Residues Gly-92, 133 to 135 (SPK), and 173 to 176 (QPMD) each bind S-adenosyl-L-methionine. Pro-210 lines the substrate pocket.

It belongs to the radical SAM superfamily. 7-carboxy-7-deazaguanine synthase family. As to quaternary structure, homodimer. [4Fe-4S] cluster is required as a cofactor. It depends on S-adenosyl-L-methionine as a cofactor. The cofactor is Mg(2+).

It catalyses the reaction 6-carboxy-5,6,7,8-tetrahydropterin + H(+) = 7-carboxy-7-deazaguanine + NH4(+). It functions in the pathway purine metabolism; 7-cyano-7-deazaguanine biosynthesis. Functionally, catalyzes the complex heterocyclic radical-mediated conversion of 6-carboxy-5,6,7,8-tetrahydropterin (CPH4) to 7-carboxy-7-deazaguanine (CDG), a step common to the biosynthetic pathways of all 7-deazapurine-containing compounds. The polypeptide is 7-carboxy-7-deazaguanine synthase (Bordetella pertussis (strain Tohama I / ATCC BAA-589 / NCTC 13251)).